Reading from the N-terminus, the 344-residue chain is Mitochondrial mRNA pseudouridine synthase RPUSD3 (344 aa).

The transit peptide at 1–41 (MGGWRVLGQASGGWRRGLGIRATSTAAGFGTKARHQLQRRG) directs the protein to the mitochondrion. The tract at residues 29–59 (FGTKARHQLQRRGASKPSDPPGDQPFPGLLR) is disordered. The segment covering 32 to 42 (KARHQLQRRGA) has biased composition (basic residues). Position 64 is a phosphoserine (S64).

This sequence belongs to the pseudouridine synthase RluA family. Forms a regulatory protein-RNA complex, consisting of RCC1L, NGRN, RPUSD3, RPUSD4, TRUB2, FASTKD2 and 16S mt-rRNA.

The protein resides in the mitochondrion matrix. It carries out the reaction a uridine in mRNA = a pseudouridine in mRNA. Its function is as follows. Catalyzes uridine to pseudouridine isomerization (pseudouridylation) of specific mitochondrial mRNAs (mt-mRNAs), a post-transcriptional modification necessary for their translation. Acts at position 390 in COXI mt-mRNA and at position 697-699 in mitochondrial COXIII mt-mRNA. As a component of a functional protein-RNA module, consisting of RCC1L, NGRN, RPUSD3, RPUSD4, TRUB2, FASTKD2 and 16S mitochondrial ribosomal RNA (16S mt-rRNA), controls 16S mt-rRNA abundance and may play a role in mitochondrial ribosome biogenesis. This Bos taurus (Bovine) protein is Mitochondrial mRNA pseudouridine synthase RPUSD3 (RPUSD3).